Here is a 555-residue protein sequence, read N- to C-terminus: 3-oxocholest-4-en-26-oate--CoA ligase (555 aa).

ATP-binding positions include 172–180, Asp418, Arg433, and Lys524; that span reads TGGTTGHPK. Residues 525–555 form a disordered region; the sequence is PDYRWAKDQTGLRPADEVYNNGDGNGAAATG. Low complexity predominate over residues 544–555; sequence NNGDGNGAAATG.

It belongs to the ATP-dependent AMP-binding enzyme family.

It catalyses the reaction (25S)-3-oxocholest-4-en-26-oate + ATP + CoA = (25S)-3-oxocholest-4-en-26-oyl-CoA + AMP + diphosphate. Its pathway is steroid metabolism; cholesterol metabolism. Functionally, involved in the degradation of the side chains of C-24 branched-chain sterols. Catalyzes the ATP-dependent CoA thioesterification of the sterol 3-oxocholest-4-en-26-oate to yield 3-oxocholest-4-en-26-oyl-CoA. It can also use beta-sitosterol, campesterol and 3beta-hydroxy-5-cholesten-26-oate. In Rhodococcus rhodochrous, this protein is 3-oxocholest-4-en-26-oate--CoA ligase.